The following is a 434-amino-acid chain: Probable glycine dehydrogenase (decarboxylating) subunit 1 (434 aa).

The protein belongs to the GcvP family. N-terminal subunit subfamily. As to quaternary structure, the glycine cleavage system is composed of four proteins: P, T, L and H. In this organism, the P 'protein' is a heterodimer of two subunits.

It carries out the reaction N(6)-[(R)-lipoyl]-L-lysyl-[glycine-cleavage complex H protein] + glycine + H(+) = N(6)-[(R)-S(8)-aminomethyldihydrolipoyl]-L-lysyl-[glycine-cleavage complex H protein] + CO2. In terms of biological role, the glycine cleavage system catalyzes the degradation of glycine. The P protein binds the alpha-amino group of glycine through its pyridoxal phosphate cofactor; CO(2) is released and the remaining methylamine moiety is then transferred to the lipoamide cofactor of the H protein. This is Probable glycine dehydrogenase (decarboxylating) subunit 1 from Thermoplasma volcanium (strain ATCC 51530 / DSM 4299 / JCM 9571 / NBRC 15438 / GSS1).